Here is a 99-residue protein sequence, read N- to C-terminus: Plastocyanin (99 aa).

Positions 1-99 (IEVLLGGGDG…AGMVGKVTVN (99 aa)) constitute a Plastocyanin-like domain. 4 residues coordinate Cu cation: His-37, Cys-84, His-87, and Met-92.

The protein belongs to the plastocyanin family. Cu(2+) serves as cofactor.

The protein resides in the plastid. It localises to the chloroplast thylakoid membrane. Its function is as follows. Participates in electron transfer between P700 and the cytochrome b6-f complex in photosystem I. The polypeptide is Plastocyanin (PETE) (Capsella bursa-pastoris (Shepherd's purse)).